Consider the following 204-residue polypeptide: dITP/XTP pyrophosphatase (204 aa).

8–13 (SRNRKK) contributes to the substrate binding site. The active-site Proton acceptor is the Asp73. Residue Asp73 coordinates Mg(2+). Residues Ser74, 155 to 158 (FGYD), Lys179, and 184 to 185 (HR) contribute to the substrate site.

It belongs to the HAM1 NTPase family. Homodimer. Mg(2+) is required as a cofactor.

It carries out the reaction XTP + H2O = XMP + diphosphate + H(+). The catalysed reaction is dITP + H2O = dIMP + diphosphate + H(+). The enzyme catalyses ITP + H2O = IMP + diphosphate + H(+). Pyrophosphatase that catalyzes the hydrolysis of nucleoside triphosphates to their monophosphate derivatives, with a high preference for the non-canonical purine nucleotides XTP (xanthosine triphosphate), dITP (deoxyinosine triphosphate) and ITP. Seems to function as a house-cleaning enzyme that removes non-canonical purine nucleotides from the nucleotide pool, thus preventing their incorporation into DNA/RNA and avoiding chromosomal lesions. In Mycolicibacterium paratuberculosis (strain ATCC BAA-968 / K-10) (Mycobacterium paratuberculosis), this protein is dITP/XTP pyrophosphatase.